We begin with the raw amino-acid sequence, 789 residues long: MTKPAADASAVLTAEDTLVLASTATPVEMELIMGWLGQQRARHPDSKFDILKLPPRNAPPAALTALVEQLEPGFASSPQSGEDRSIVPVRVIWLPPADRSRAGKVAALLPGRDPYHPSQRQQRRILRTDPRRARVVAGESAKVSELRQQWRDTTVAEHKRDFAQFVSRRALLALARAEYRILGPQYKSPRLVKPEMLASARFRAGLDRIPGATVEDAGKMLDELSTGWSQVSVDLVSVLGRLASRGFDPEFDYDEYQVAAMRAALEAHPAVLLFSHRSYIDGVVVPVAMQDNRLPPVHMFGGINLSFGLMGPLMRRSGMIFIRRNIGNDPLYKYVLKEYVGYVVEKRFNLSWSIEGTRSRTGKMLPPKLGLMSYVADAYLDGRSDDILLQGVSICFDQLHEITEYAAYARGAEKTPEGLRWLYNFIKAQGERNFGKIYVRFPEAVSMRQYLGAPHGELTQDPAAKRLALQKMSFEVAWRILQATPVTATGLVSALLLTTRGTALTLDQLHHTLQDSLDYLERKQSPVSTSALRLRSREGVRAAADALSNGHPVTRVDSGREPVWYIAPDDEHAAAFYRSSVIHAFLETSIVELALAHAKHAEGDRVAAFWAQAMRLRDLLKFDFYFADSTAFRANIAQEMAWHQDWEDHLGVGGNEIDAMLYAKRPLMSDAMLRVFFEAYEIVADVLRDAPPDIGPEELTELALGLGRQFVAQGRVRSSEPVSTLLFATARQVAVDQELIAPAADLAERRVAFRRELRNILRDFDYVEQIARNQFVAREFKARQGRDRI.

The short motif at 276-281 (HRSYID) is the HXXXXD motif element.

Belongs to the GPAT/DAPAT family.

It localises to the cell membrane. The enzyme catalyses sn-glycerol 3-phosphate + an acyl-CoA = a 1-acyl-sn-glycero-3-phosphate + CoA. The protein operates within phospholipid metabolism; CDP-diacylglycerol biosynthesis; CDP-diacylglycerol from sn-glycerol 3-phosphate: step 1/3. The sequence is that of Glycerol-3-phosphate acyltransferase from Mycobacterium bovis (strain ATCC BAA-935 / AF2122/97).